The sequence spans 731 residues: Anaphase-promoting complex subunit 2 (731 aa).

The protein belongs to the cullin family. The APC/C is probably composed of at least 12 subunits: apc-2, apc-10, apc-11, cdc-26, emb-1, emb-27, emb-30, mat-1, mat-2, mat-3, such-1 and gfi-3.

It participates in protein modification; protein ubiquitination. Functionally, probable component of the anaphase promoting complex/cyclosome (APC/C), a cell cycle-regulated ubiquitin ligase that controls progression through mitosis and the G1 phase of the cell cycle. The APC/C complex acts by mediating ubiquitination and subsequent degradation of target proteins. Developmental role in early embryogenesis and the metaphase to anaphase transition in meiosis and mitosis. This Caenorhabditis elegans protein is Anaphase-promoting complex subunit 2.